Reading from the N-terminus, the 338-residue chain is D-erythrose-4-phosphate dehydrogenase (338 aa).

12-13 (RI) lines the NAD(+) pocket. Substrate-binding positions include 154–156 (SCT), R200, 213–214 (TK), and R236. C155 (nucleophile) is an active-site residue. N318 provides a ligand contact to NAD(+).

The protein belongs to the glyceraldehyde-3-phosphate dehydrogenase family. Epd subfamily. As to quaternary structure, homotetramer.

The protein localises to the cytoplasm. The catalysed reaction is D-erythrose 4-phosphate + NAD(+) + H2O = 4-phospho-D-erythronate + NADH + 2 H(+). It participates in cofactor biosynthesis; pyridoxine 5'-phosphate biosynthesis; pyridoxine 5'-phosphate from D-erythrose 4-phosphate: step 1/5. In terms of biological role, catalyzes the NAD-dependent conversion of D-erythrose 4-phosphate to 4-phosphoerythronate. The chain is D-erythrose-4-phosphate dehydrogenase from Pectobacterium carotovorum subsp. carotovorum (strain PC1).